Reading from the N-terminus, the 282-residue chain is ATP synthase subunit a (282 aa).

The next 5 helical transmembrane spans lie at 45-65 (AIHV…LWLF), 106-126 (IAPL…MDLI), 160-179 (INAT…FYSI), 232-252 (LIFI…SVPW), and 253-273 (AIFH…LTIV).

It belongs to the ATPase A chain family. In terms of assembly, F-type ATPases have 2 components, CF(1) - the catalytic core - and CF(0) - the membrane proton channel. CF(1) has five subunits: alpha(3), beta(3), gamma(1), delta(1), epsilon(1). CF(0) has three main subunits: a(1), b(2) and c(9-12). The alpha and beta chains form an alternating ring which encloses part of the gamma chain. CF(1) is attached to CF(0) by a central stalk formed by the gamma and epsilon chains, while a peripheral stalk is formed by the delta and b chains.

The protein resides in the cell inner membrane. Key component of the proton channel; it plays a direct role in the translocation of protons across the membrane. In Marinomonas sp. (strain MWYL1), this protein is ATP synthase subunit a.